Consider the following 787-residue polypeptide: Patatin-like phospholipase domain-containing protein OOU_Y34scaffold00095g16.3 (787 aa).

2 disordered regions span residues 47–69 and 137–164; these read APDTTQPPDDGLASPRSPSARSF and KVVGSQTHRQKKSSRRRKRSKAVAPGRR. Positions 59–69 are enriched in low complexity; it reads ASPRSPSARSF. Basic residues predominate over residues 144–157; that stretch reads HRQKKSSRRRKRSK. A helical transmembrane segment spans residues 180-200; it reads WPFLLIVGAWIVGLAVTYLFT. The PNPLA domain maps to 375-566; that stretch reads LCLSGGASFA…RTDIPIRALN (192 aa). A GXSXG motif is present at residues 406–410; it reads GTSGG. The active-site Nucleophile is the Ser408. Asp553 functions as the Proton acceptor in the catalytic mechanism. A disordered region spans residues 745–787; sequence GTDEEITTNDEMEFASDEKAVLTEDEGQFDGVTDNTEGSPLLK. The segment covering 746–759 has biased composition (acidic residues); sequence TDEEITTNDEMEFA. Positions 777–787 are enriched in polar residues; the sequence is TDNTEGSPLLK.

Belongs to the PLPL family.

Its subcellular location is the membrane. Probable lipid hydrolase. The sequence is that of Patatin-like phospholipase domain-containing protein OOU_Y34scaffold00095g16.3 from Pyricularia oryzae (strain Y34) (Rice blast fungus).